A 366-amino-acid chain; its full sequence is Carbamoyl phosphate synthase small chain (366 aa).

The tract at residues 1 to 168 (MYGILVLEDG…KETVVYSADD (168 aa)) is CPSase. The L-glutamine site is built by Ser45, Gly220, and Gly222. The 192-residue stretch at 172-363 (KCVLIDCGVK…VELGIKFKAE (192 aa)) folds into the Glutamine amidotransferase type-1 domain. Residue Cys247 is the Nucleophile of the active site. 5 residues coordinate L-glutamine: Leu248, Gln251, Asn289, Gly291, and Phe292. Active-site residues include His336 and Glu338.

Belongs to the CarA family. In terms of assembly, composed of two chains; the small (or glutamine) chain promotes the hydrolysis of glutamine to ammonia, which is used by the large (or ammonia) chain to synthesize carbamoyl phosphate. Tetramer of heterodimers (alpha,beta)4.

It catalyses the reaction hydrogencarbonate + L-glutamine + 2 ATP + H2O = carbamoyl phosphate + L-glutamate + 2 ADP + phosphate + 2 H(+). The enzyme catalyses L-glutamine + H2O = L-glutamate + NH4(+). Its pathway is amino-acid biosynthesis; L-arginine biosynthesis; carbamoyl phosphate from bicarbonate: step 1/1. It functions in the pathway pyrimidine metabolism; UMP biosynthesis via de novo pathway; (S)-dihydroorotate from bicarbonate: step 1/3. In terms of biological role, small subunit of the glutamine-dependent carbamoyl phosphate synthetase (CPSase). CPSase catalyzes the formation of carbamoyl phosphate from the ammonia moiety of glutamine, carbonate, and phosphate donated by ATP, constituting the first step of 2 biosynthetic pathways, one leading to arginine and/or urea and the other to pyrimidine nucleotides. The small subunit (glutamine amidotransferase) binds and cleaves glutamine to supply the large subunit with the substrate ammonia. The protein is Carbamoyl phosphate synthase small chain of Methanococcus maripaludis (strain C6 / ATCC BAA-1332).